The chain runs to 151 residues: MNRSFHFLIKYIYIHVLLVFYFHIKQQAIMPFFIFFFSSFDGLSFDLRVVAFLAKHVFVGVCSPFFVVGFFGSSRVVVTEWLSKLVLPPPPVSITQVFSLSRKRGEFSSGYILIINPYKSFLRSLLDFSIFNNTAKNKSSTFTLNLEDVSK.

Asparagine 2 carries an N-linked (GlcNAc...) asparagine glycan. Transmembrane regions (helical) follow at residues 17–37 (LLVF…IFFF) and 51–71 (AFLA…VGFF). Asparagine 132 and asparagine 137 each carry an N-linked (GlcNAc...) asparagine glycan.

It localises to the membrane. Its function is as follows. May be involved in cell wall organization and biogenesis. The polypeptide is Protein ECM12 (ECM12) (Saccharomyces cerevisiae (strain ATCC 204508 / S288c) (Baker's yeast)).